A 504-amino-acid polypeptide reads, in one-letter code: MLPPKTFFEKVKEIIWPIERKELKLFIPMALMMLCILFNFGALRSIKDSLVVPSMGAEIISFLKLWLVLPACVIFTILYVKLSNKFNFEYVFYIIVGSFLLFFLFFAYIIYPNQEAYHPNNEIINSLITSYPNFKWFIKIASKWSYGLMYIFAELWSAVVINLMFWQFANHIFDTNKAKRFYPVLGMVGNIGLILAGSVLVFFSGNKIIDPELLPNSFDASVNLTSQTTEMLQPIMSIIVAAGVISMLLFRIINKSILTDSINVLDSKKVKAKTKTKLSVLESIKLVINSKYIGRIALLIICYGLLINIVEGPWKAKVKELYPSTIDYVHFMGRFNILMGISCVTFMIIGSNILRRLGWFFSALLTPIMLSITGLMFFIFIIFIEEIGSCFGNFNLLYAAIIVGAIQNILSKSSKYSLFDSTKEMAYIPLSLELRTKGKAAVEVIGTKFGKSLGAFIQSLIFIIIPTATFDSIIIYLLVIFIVMISLWIWDVVKLNKEYTELCK.

A run of 12 helical transmembrane segments spans residues 23-43 (LKLF…FGAL), 59-79 (IISF…TILY), 90-110 (YVFY…AYII), 146-166 (YGLM…LMFW), 183-203 (PVLG…LVFF), 230-250 (EMLQ…MLLF), 296-316 (IALL…PWKA), 329-349 (VHFM…FMII), 364-384 (LLTP…IIFI), 386-406 (EIGS…VGAI), 449-469 (FGKS…PTAT), and 473-493 (IIIY…WDVV).

This sequence belongs to the ADP/ATP translocase tlc family.

The protein localises to the cell membrane. Provides the rickettsial cell with host ATP in exchange for rickettsial ADP. This is an obligate exchange system. This energy acquiring activity is an important component of rickettsial parasitism. This Rickettsia bellii (strain RML369-C) protein is ADP,ATP carrier protein 3 (tlcC).